The primary structure comprises 363 residues: Zinc phosphodiesterase ELAC protein 1 (363 aa).

Residues His62, His64, Asp66, His67, His182, Asp253, and His313 each coordinate Zn(2+). Residue Asp66 is the Proton acceptor of the active site.

The protein belongs to the RNase Z family. As to quaternary structure, homodimer. Zn(2+) is required as a cofactor.

It is found in the cytoplasm. It localises to the cytosol. The protein resides in the nucleus. The enzyme catalyses Endonucleolytic cleavage of RNA, removing extra 3' nucleotides from tRNA precursor, generating 3' termini of tRNAs. A 3'-hydroxy group is left at the tRNA terminus and a 5'-phosphoryl group is left at the trailer molecule.. In terms of biological role, zinc phosphodiesterase, which displays some tRNA 3'-processing endonuclease activity. Specifically involved in tRNA repair: acts downstream of the ribosome-associated quality control (RQC) pathway by removing a 2',3'-cyclic phosphate from tRNAs following cleavage by ANKZF1. tRNAs are then processed by TRNT1. This Bos taurus (Bovine) protein is Zinc phosphodiesterase ELAC protein 1 (ELAC1).